The chain runs to 609 residues: UvrABC system protein C (609 aa).

The 79-residue stretch at 16–94 folds into the GIY-YIG domain; it reads SSPGVYRMYD…IKQYMPKYNV (79 aa). One can recognise a UVR domain in the interval 203-238; it reads HQVMSVLVGKMEQAASDMRYEQAALYRDQITALRRV.

This sequence belongs to the UvrC family. Interacts with UvrB in an incision complex.

Its subcellular location is the cytoplasm. Its function is as follows. The UvrABC repair system catalyzes the recognition and processing of DNA lesions. UvrC both incises the 5' and 3' sides of the lesion. The N-terminal half is responsible for the 3' incision and the C-terminal half is responsible for the 5' incision. The protein is UvrABC system protein C of Shewanella halifaxensis (strain HAW-EB4).